Here is a 542-residue protein sequence, read N- to C-terminus: Quinidine resistance protein 2 (542 aa).

The Cytoplasmic segment spans residues 1–67 (MAGATSSIIR…SFKTVLIAQC (67 aa)). A Phosphoserine modification is found at S21. T38 bears the Phosphothreonine mark. S40 carries the post-translational modification Phosphoserine. A helical membrane pass occupies residues 68–88 (AFTGFFSTIAGAIYYPVLSVI). At 89 to 100 (ERKFDIDEELVN) the chain is on the extracellular side. The helical transmembrane segment at 101–121 (VTVVVYFVFQGLAPTFMGGFA) threads the bilayer. At 122-127 (DSLGRR) the chain is on the cytoplasmic side. Residues 128-148 (PVVLVAIVIYFGACIGLACAQ) form a helical membrane-spanning segment. T149 is a topological domain (extracellular). Residues 150–170 (YAQIIVLRCLQAAGISPVIAI) traverse the membrane as a helical segment. Residues 171–187 (NSGIMGDVTTRAERGGY) lie on the Cytoplasmic side of the membrane. The chain crosses the membrane as a helical span at residues 188–208 (VGYVAGFQVLGSAFGALIGAG). Topologically, residues 209-216 (LSSRWGWR) are extracellular. A helical transmembrane segment spans residues 217–237 (AIFWFLAIGSGICFLASFLIL). Topologically, residues 238–300 (PETKRNISGN…APFKILKAYE (63 aa)) are cytoplasmic. A helical membrane pass occupies residues 301–321 (ICILMLVAGLQFAMYTTHLTA). Residues 322–333 (LSTALSKQYHLT) lie on the Extracellular side of the membrane. Residues 334 to 354 (VAKVGLCYLPSGICTLCSIVI) form a helical membrane-spanning segment. The Cytoplasmic segment spans residues 355–413 (AGRYLNWNYRRRLKYYQNWLGKKRSKLLEEHDNDLNLVQRIIENDPKYTFNIFKARLQP). The helical transmembrane segment at 414–434 (AFVTLLLSSSGFCAYGWCITV) threads the bilayer. The Extracellular portion of the chain corresponds to 435 to 437 (KAP). The helical transmembrane segment at 438-458 (LAAVLCMSGFASLFSNCILTF) threads the bilayer. The Cytoplasmic portion of the chain corresponds to 459-472 (STTLIVDLFPTKTS). Residues 473–493 (TATGCLNLFRCILSAVFIAAL) form a helical membrane-spanning segment. Residues 494–503 (SKMVEKMKFG) lie on the Extracellular side of the membrane. A helical transmembrane segment spans residues 504–524 (GVFTFLGALTSSSSILLFILL). Topologically, residues 525 to 542 (RKGKELAFKRKKQELGVN) are cytoplasmic.

Belongs to the major facilitator superfamily. CAR1 family.

Its subcellular location is the cell membrane. Multidrug resistance transporter involved in resistance and adaptation to quinidine and to the herbicide barban (4-chloro-2-butynyl [3-chlorophenyl] carbamate). Implicated in potassium uptake. The polypeptide is Quinidine resistance protein 2 (QDR2) (Saccharomyces cerevisiae (strain ATCC 204508 / S288c) (Baker's yeast)).